Consider the following 81-residue polypeptide: Cytotoxin 1d/1e (81 aa).

Residues 1-21 (MKTLLLTLVVVTIVCLDLGYT) form the signal peptide. 4 disulfides stabilise this stretch: C24-C42, C35-C59, C63-C74, and C75-C80.

It belongs to the three-finger toxin family. Short-chain subfamily. Type IA cytotoxin sub-subfamily. As to quaternary structure, monomer in solution; Homodimer and oligomer in the presence of negatively charged lipids forming a pore with a size ranging between 20 and 30 Angstroms. In terms of tissue distribution, expressed by the venom gland.

It is found in the secreted. It localises to the target cell membrane. Shows cytolytic activity on many different cells by forming pore in lipid membranes. In vivo, increases heart rate or kills the animal by cardiac arrest. In addition, it binds to heparin with high affinity, interacts with Kv channel-interacting protein 1 (KCNIP1) in a calcium-independent manner, and binds to integrin alpha-V/beta-3 (ITGAV/ITGB3) with moderate affinity. In Naja atra (Chinese cobra), this protein is Cytotoxin 1d/1e.